We begin with the raw amino-acid sequence, 283 residues long: Pantothenate synthetase (283 aa).

An ATP-binding site is contributed by 26-33; that stretch reads MGNLHEGH. The Proton donor role is filled by His33. A (R)-pantoate-binding site is contributed by Gln57. Gln57 serves as a coordination point for beta-alanine. 144–147 is a binding site for ATP; sequence GKKD. Gln150 is a (R)-pantoate binding site. ATP-binding positions include Ile173 and 181-184; that span reads LSSR.

Belongs to the pantothenate synthetase family. Homodimer.

Its subcellular location is the cytoplasm. The enzyme catalyses (R)-pantoate + beta-alanine + ATP = (R)-pantothenate + AMP + diphosphate + H(+). The protein operates within cofactor biosynthesis; (R)-pantothenate biosynthesis; (R)-pantothenate from (R)-pantoate and beta-alanine: step 1/1. In terms of biological role, catalyzes the condensation of pantoate with beta-alanine in an ATP-dependent reaction via a pantoyl-adenylate intermediate. This chain is Pantothenate synthetase, found in Polynucleobacter necessarius subsp. necessarius (strain STIR1).